We begin with the raw amino-acid sequence, 156 residues long: ATP synthase subunit b (156 aa).

The helical transmembrane segment at 1–21 threads the bilayer; that stretch reads MSINATLLIQIIAFVLLIWFV.

The protein belongs to the ATPase B chain family. As to quaternary structure, F-type ATPases have 2 components, F(1) - the catalytic core - and F(0) - the membrane proton channel. F(1) has five subunits: alpha(3), beta(3), gamma(1), delta(1), epsilon(1). F(0) has three main subunits: a(1), b(2) and c(10-14). The alpha and beta chains form an alternating ring which encloses part of the gamma chain. F(1) is attached to F(0) by a central stalk formed by the gamma and epsilon chains, while a peripheral stalk is formed by the delta and b chains.

It is found in the cell inner membrane. F(1)F(0) ATP synthase produces ATP from ADP in the presence of a proton or sodium gradient. F-type ATPases consist of two structural domains, F(1) containing the extramembraneous catalytic core and F(0) containing the membrane proton channel, linked together by a central stalk and a peripheral stalk. During catalysis, ATP synthesis in the catalytic domain of F(1) is coupled via a rotary mechanism of the central stalk subunits to proton translocation. In terms of biological role, component of the F(0) channel, it forms part of the peripheral stalk, linking F(1) to F(0). This chain is ATP synthase subunit b, found in Hydrogenovibrio crunogenus (strain DSM 25203 / XCL-2) (Thiomicrospira crunogena).